A 652-amino-acid chain; its full sequence is DNA ligase (652 aa).

NAD(+) contacts are provided by residues 29–33 (DSEYD), 78–79 (SL), and glutamate 107. Lysine 109 functions as the N6-AMP-lysine intermediate in the catalytic mechanism. NAD(+) contacts are provided by arginine 130, glutamate 164, lysine 278, and lysine 302. Zn(2+) is bound by residues cysteine 395, cysteine 398, cysteine 413, and cysteine 418. One can recognise a BRCT domain in the interval 577–652 (VADAALSGLT…VRDEAWLESL (76 aa)).

This sequence belongs to the NAD-dependent DNA ligase family. LigA subfamily. The cofactor is Mg(2+). Mn(2+) serves as cofactor.

It carries out the reaction NAD(+) + (deoxyribonucleotide)n-3'-hydroxyl + 5'-phospho-(deoxyribonucleotide)m = (deoxyribonucleotide)n+m + AMP + beta-nicotinamide D-nucleotide.. In terms of biological role, DNA ligase that catalyzes the formation of phosphodiester linkages between 5'-phosphoryl and 3'-hydroxyl groups in double-stranded DNA using NAD as a coenzyme and as the energy source for the reaction. It is essential for DNA replication and repair of damaged DNA. In Streptococcus pneumoniae serotype 2 (strain D39 / NCTC 7466), this protein is DNA ligase.